A 932-amino-acid polypeptide reads, in one-letter code: Protocadherin gamma-A8 (932 aa).

Positions 1–29 (MAAPQSRPRRGELILLCALLGTLWEIGRG) are cleaved as a signal peptide. 6 consecutive Cadherin domains span residues 30 to 133 (QIRY…NPKF), 134 to 242 (QVED…APVF), 243 to 347 (PHPI…RPEV), 348 to 452 (IITS…PPTF), 453 to 562 (PHAS…APEI), and 570 to 682 (DGST…KPSV). Residues 30 to 692 (QIRYSVPEET…DPNDSSLTLY (663 aa)) are Extracellular-facing. Asn-47 carries an N-linked (GlcNAc...) asparagine glycan. Asn-414, Asn-419, and Asn-545 each carry an N-linked (GlcNAc...) asparagine glycan. Asn-685 is a glycosylation site (N-linked (GlcNAc...) asparagine). The chain crosses the membrane as a helical span at residues 693–713 (LVVAVAAISCVFLAFVAVLLG). Residues 714–932 (LRLRRWHKSH…KKKSGKKEKK (219 aa)) are Cytoplasmic-facing. Disordered stretches follow at residues 804-841 (ADHGQQAPPNTDWRFSQAQRPGTSGSQNGDDTGTWPNN) and 902-932 (ATLTNAAGKRDGKAPAGGNGNKKKSGKKEKK). Polar residues predominate over residues 810-841 (APPNTDWRFSQAQRPGTSGSQNGDDTGTWPNN). A compositionally biased stretch (basic residues) spans 922–932 (NKKKSGKKEKK).

The protein resides in the cell membrane. Functionally, potential calcium-dependent cell-adhesion protein. May be involved in the establishment and maintenance of specific neuronal connections in the brain. This chain is Protocadherin gamma-A8 (PCDHGA8), found in Pan troglodytes (Chimpanzee).